Consider the following 399-residue polypeptide: Type II secretion system protein L (399 aa).

The Cytoplasmic segment spans residues 1 to 247; the sequence is MSKAENTSGK…VKPWKQALLP (247 aa). The helical transmembrane segment at 248 to 264 threads the bilayer; it reads WRNVLIALSAWLLLVLG. At 265-399 the chain is on the periplasmic side; sequence ESVWTHYQWY…EGQLTLRSQP (135 aa).

It belongs to the GSP L family. Type II secretion system is composed of four main components: the outer membrane complex, the inner membrane complex, the cytoplasmic secretion ATPase and the periplasm-spanning pseudopilus. Forms homodimers. Interacts with OutM/GspM. Interacts with OutE/GspE and OutF/GspF.

The protein localises to the cell inner membrane. Functionally, inner membrane component of the type II secretion system required for the energy-dependent secretion of extracellular factors such as proteases and toxins from the periplasm. Plays a role in the complex assembly and recruits OutM resulting in a stable complex in the inner membrane. Provides thus a link between the energy-providing OutE protein in the cytoplasm and the rest of the T2SS machinery. The polypeptide is Type II secretion system protein L (outL) (Dickeya chrysanthemi (Pectobacterium chrysanthemi)).